The primary structure comprises 154 residues: Transcriptional repressor NrdR (154 aa).

A zinc finger spans residues 3–34 (CPFCAHPDTRVADSRLMEERNAVRRRRHCPNC). The ATP-cone domain occupies 49-139 (PAVIGPDKKR…LHKRFDNPAD (91 aa)).

This sequence belongs to the NrdR family. It depends on Zn(2+) as a cofactor.

Negatively regulates transcription of bacterial ribonucleotide reductase nrd genes and operons by binding to NrdR-boxes. The polypeptide is Transcriptional repressor NrdR (Neisseria meningitidis serogroup B (strain ATCC BAA-335 / MC58)).